Reading from the N-terminus, the 24-residue chain is Coenzyme PQQ synthesis protein A (24 aa).

The pyrroloquinoline quinone (Glu-Tyr) cross-link spans 16 to 20 (EITMY).

The protein belongs to the PqqA family.

The protein operates within cofactor biosynthesis; pyrroloquinoline quinone biosynthesis. In terms of biological role, required for coenzyme pyrroloquinoline quinone (PQQ) biosynthesis. PQQ is probably formed by cross-linking a specific glutamate to a specific tyrosine residue and excising these residues from the peptide. This Burkholderia cenocepacia (strain ATCC BAA-245 / DSM 16553 / LMG 16656 / NCTC 13227 / J2315 / CF5610) (Burkholderia cepacia (strain J2315)) protein is Coenzyme PQQ synthesis protein A.